The chain runs to 302 residues: Urease accessory protein UreD 1 (302 aa).

Belongs to the UreD family. UreD, UreF and UreG form a complex that acts as a GTP-hydrolysis-dependent molecular chaperone, activating the urease apoprotein by helping to assemble the nickel containing metallocenter of UreC. The UreE protein probably delivers the nickel.

The protein localises to the cytoplasm. Functionally, required for maturation of urease via the functional incorporation of the urease nickel metallocenter. The protein is Urease accessory protein UreD 1 of Psychrobacter cryohalolentis (strain ATCC BAA-1226 / DSM 17306 / VKM B-2378 / K5).